Consider the following 99-residue polypeptide: Integration host factor subunit alpha (99 aa).

The interval 49–73 (FGNFDLRDKNQRPGRNPKTGEDIPI) is disordered.

Belongs to the bacterial histone-like protein family. As to quaternary structure, heterodimer of an alpha and a beta chain.

This protein is one of the two subunits of integration host factor, a specific DNA-binding protein that functions in genetic recombination as well as in transcriptional and translational control. This is Integration host factor subunit alpha from Shigella boydii serotype 18 (strain CDC 3083-94 / BS512).